The chain runs to 299 residues: MSRPEQQFKKVLKNPQAQYAVYPTVKVERISTTEHSYFIATKPMFEGGRRNNVFLGQQIRQSVVFKYVSKKEIPGNEVIVMKALQDTPGIIKLIEYTENAMYYILIIEYIPNSVDLLHYHYFKKLEENEAKKIMFQLILIIQNIYEKGFIHGDIKDENLIIDIKQKMIKVIDFGSAVRLNEDHPQYNMFGTWEYVCPEFYYYGYYYQLPLTVWTIGMVAVNLFRFRAENFYLNDILKGENYIPDHISETGKQFITDCLTINENKRLSFKGLVSHPWFKGLKKEIQPISELGVDYKNVIT.

The Protein kinase domain maps to 39 to 277; that stretch reads IATKPMFEGG…FKGLVSHPWF (239 aa). Residues 45-53 and Lys66 each bind ATP; that span reads FEGGRRNNV. The Proton acceptor role is filled by Asp153.

It belongs to the protein kinase superfamily. Ser/Thr protein kinase family.

The protein resides in the virion. It is found in the host cytoplasm. It carries out the reaction L-seryl-[protein] + ATP = O-phospho-L-seryl-[protein] + ADP + H(+). The enzyme catalyses L-threonyl-[protein] + ATP = O-phospho-L-threonyl-[protein] + ADP + H(+). Essential for viral replication. It may mediate the virus progression through DNA replication. This African swine fever virus (isolate Pig/Kenya/KEN-50/1950) (ASFV) protein is Serine/threonine-protein kinase 1.